A 208-amino-acid polypeptide reads, in one-letter code: N-(5'-phosphoribosyl)anthranilate isomerase (208 aa).

It belongs to the TrpF family.

The catalysed reaction is N-(5-phospho-beta-D-ribosyl)anthranilate = 1-(2-carboxyphenylamino)-1-deoxy-D-ribulose 5-phosphate. It participates in amino-acid biosynthesis; L-tryptophan biosynthesis; L-tryptophan from chorismate: step 3/5. This Methanococcus maripaludis (strain C5 / ATCC BAA-1333) protein is N-(5'-phosphoribosyl)anthranilate isomerase.